The chain runs to 95 residues: Defensin-like protein 232 (95 aa).

The signal sequence occupies residues 1 to 26 (MRCTTLIMVSFVVSCLLLSLVEESEA). 4 cysteine pairs are disulfide-bonded: Cys33–Cys94, Cys43–Cys68, Cys51–Cys84, and Cys66–Cys86.

This sequence belongs to the DEFL family. As to expression, flower buds.

The protein localises to the secreted. The polypeptide is Defensin-like protein 232 (SCRL23) (Arabidopsis thaliana (Mouse-ear cress)).